A 1326-amino-acid polypeptide reads, in one-letter code: Paired amphipathic helix protein Sin3-like 4 (1326 aa).

PAH domains follow at residues 8-78 (QKLT…LPKG), 95-165 (KPVE…LPDT), and 292-367 (IPSS…LAQC). Disordered regions lie at residues 272-299 (DDDS…STYD), 715-812 (VPSR…RAET), 844-864 (SVAG…TEEL), and 927-1000 (SKSK…EGDM). Over residues 721–737 (GAEDREDAVKSTNHDRE) the composition is skewed to basic and acidic residues. Composition is skewed to polar residues over residues 744–757 (SPQN…SMRS), 781–805 (SSKT…NLTT), 844–861 (SVAG…TSGT), and 942–961 (PRSS…SGTD). Positions 967 to 981 (DCYREDDIDHNKVES) are enriched in basic and acidic residues.

It localises to the nucleus. Functionally, acts as a transcriptional repressor. Plays roles in regulating gene expression and genome stability. In Arabidopsis thaliana (Mouse-ear cress), this protein is Paired amphipathic helix protein Sin3-like 4 (SNL4).